A 163-amino-acid polypeptide reads, in one-letter code: Ureidoglycolate lyase 2 (163 aa).

This sequence belongs to the ureidoglycolate lyase family. In terms of assembly, homodimer. The cofactor is Ni(2+).

The enzyme catalyses (S)-ureidoglycolate = urea + glyoxylate. Its pathway is nitrogen metabolism; (S)-allantoin degradation. In terms of biological role, catalyzes the catabolism of the allantoin degradation intermediate (S)-ureidoglycolate, generating urea and glyoxylate. Involved in the utilization of allantoin as nitrogen source. This is Ureidoglycolate lyase 2 from Rhizobium meliloti (strain 1021) (Ensifer meliloti).